We begin with the raw amino-acid sequence, 504 residues long: Maturase K (504 aa).

This sequence belongs to the intron maturase 2 family. MatK subfamily.

The protein localises to the plastid. The protein resides in the chloroplast. Usually encoded in the trnK tRNA gene intron. Probably assists in splicing its own and other chloroplast group II introns. The protein is Maturase K of Prionotes cerinthoides (Climbing heath).